A 761-amino-acid polypeptide reads, in one-letter code: Xaa-Pro dipeptidyl-peptidase (761 aa).

Catalysis depends on charge relay system residues Ser347, Asp467, and His497.

This sequence belongs to the peptidase S15 family. In terms of assembly, homodimer.

It localises to the cytoplasm. The enzyme catalyses Hydrolyzes Xaa-Pro-|- bonds to release unblocked, N-terminal dipeptides from substrates including Ala-Pro-|-p-nitroanilide and (sequentially) Tyr-Pro-|-Phe-Pro-|-Gly-Pro-|-Ile.. Its function is as follows. Removes N-terminal dipeptides sequentially from polypeptides having unsubstituted N-termini provided that the penultimate residue is proline. This chain is Xaa-Pro dipeptidyl-peptidase, found in Streptococcus agalactiae serotype III (strain NEM316).